The sequence spans 357 residues: Protein RecA (357 aa).

73–80 (GPESSGKT) lines the ATP pocket.

This sequence belongs to the RecA family.

Its subcellular location is the cytoplasm. Its function is as follows. Can catalyze the hydrolysis of ATP in the presence of single-stranded DNA, the ATP-dependent uptake of single-stranded DNA by duplex DNA, and the ATP-dependent hybridization of homologous single-stranded DNAs. It interacts with LexA causing its activation and leading to its autocatalytic cleavage. This Nitratidesulfovibrio vulgaris (strain DSM 19637 / Miyazaki F) (Desulfovibrio vulgaris) protein is Protein RecA.